The sequence spans 489 residues: Threonine/serine exporter (489 aa).

The next 10 membrane-spanning stretches (helical) occupy residues 151 to 171, 174 to 194, 206 to 226, 233 to 253, 268 to 288, 314 to 334, 335 to 355, 356 to 376, 381 to 401, and 420 to 440; these read GFPV…VLLG, WQVS…TSFL, VVGG…ALQF, SQII…VQSL, FFET…GIQL, IIAG…EWSS, VIIA…FVVY, LGPV…GGLL, LIPP…GLAI, and IAVA…GEWI. The segment at 464-489 is disordered; that stretch reads FQEEAEQNQRRQRKRPKTNQRFGNKR. Residues 473-489 are compositionally biased toward basic residues; the sequence is RRQRKRPKTNQRFGNKR.

Belongs to the ThrE exporter (TC 2.A.79) family.

Its subcellular location is the cell membrane. It carries out the reaction L-threonine(in) + H(+)(out) = L-threonine(out) + H(+)(in). Transport is inhibited by the proton ionophore carbonyl cyanide m-chlorophenylhydrazone (CCCP). Functionally, catalyzes the export of L-threonine and L-serine from the cell to the extracellular environment. Export is dependent on the proton motive force. The sequence is that of Threonine/serine exporter from Corynebacterium glutamicum (Brevibacterium saccharolyticum).